The primary structure comprises 449 residues: Glutamyl-tRNA reductase (449 aa).

Residues T58–R61, S121, E126–Q128, and Q132 each bind substrate. Catalysis depends on C59, which acts as the Nucleophile. An NADP(+)-binding site is contributed by G203–A208.

Belongs to the glutamyl-tRNA reductase family. In terms of assembly, homodimer.

It carries out the reaction (S)-4-amino-5-oxopentanoate + tRNA(Glu) + NADP(+) = L-glutamyl-tRNA(Glu) + NADPH + H(+). Its pathway is porphyrin-containing compound metabolism; protoporphyrin-IX biosynthesis; 5-aminolevulinate from L-glutamyl-tRNA(Glu): step 1/2. Catalyzes the NADPH-dependent reduction of glutamyl-tRNA(Glu) to glutamate 1-semialdehyde (GSA). This Helicobacter pylori (strain HPAG1) protein is Glutamyl-tRNA reductase.